Reading from the N-terminus, the 127-residue chain is DNA-directed RNA polymerase subunit omega (127 aa).

The protein belongs to the RNA polymerase subunit omega family. The RNAP catalytic core consists of 2 alpha, 1 beta, 1 beta' and 1 omega subunit. When a sigma factor is associated with the core the holoenzyme is formed, which can initiate transcription.

It catalyses the reaction RNA(n) + a ribonucleoside 5'-triphosphate = RNA(n+1) + diphosphate. Promotes RNA polymerase assembly. Latches the N- and C-terminal regions of the beta' subunit thereby facilitating its interaction with the beta and alpha subunits. The protein is DNA-directed RNA polymerase subunit omega of Rickettsia canadensis (strain McKiel).